Reading from the N-terminus, the 70-residue chain is Beta-defensin 43 (70 aa).

An N-terminal signal peptide occupies residues M1–S22. 2 disulfides stabilise this stretch: C29-C57 and C36-C50.

It belongs to the beta-defensin family.

The protein resides in the secreted. Functionally, has bactericidal activity. This chain is Beta-defensin 43 (Defb43), found in Rattus norvegicus (Rat).